Consider the following 373-residue polypeptide: Cobalt-precorrin-5B C(1)-methyltransferase (373 aa).

This sequence belongs to the CbiD family.

The enzyme catalyses Co-precorrin-5B + S-adenosyl-L-methionine = Co-precorrin-6A + S-adenosyl-L-homocysteine. It functions in the pathway cofactor biosynthesis; adenosylcobalamin biosynthesis; cob(II)yrinate a,c-diamide from sirohydrochlorin (anaerobic route): step 6/10. Its function is as follows. Catalyzes the methylation of C-1 in cobalt-precorrin-5B to form cobalt-precorrin-6A. The chain is Cobalt-precorrin-5B C(1)-methyltransferase from Halorhodospira halophila (strain DSM 244 / SL1) (Ectothiorhodospira halophila (strain DSM 244 / SL1)).